The sequence spans 138 residues: Putative pre-16S rRNA nuclease (138 aa).

Belongs to the YqgF nuclease family.

The protein resides in the cytoplasm. Functionally, could be a nuclease involved in processing of the 5'-end of pre-16S rRNA. The sequence is that of Putative pre-16S rRNA nuclease from Klebsiella pneumoniae (strain 342).